A 110-amino-acid chain; its full sequence is uncharacterized protein (110 aa).

The first 26 residues, 1-26 (MIRNVLLAFMICSGMTLLGGCSSVMS), serve as a signal peptide directing secretion. Positions 87 to 110 (RVEKSEANAQATNAVIPPARMPDN) are disordered.

This sequence to E.coli YceK.

This is an uncharacterized protein from Escherichia coli (strain K12).